The chain runs to 166 residues: Protein-export protein SecB (166 aa).

The protein belongs to the SecB family. As to quaternary structure, homotetramer, a dimer of dimers. One homotetramer interacts with 1 SecA dimer.

It is found in the cytoplasm. One of the proteins required for the normal export of preproteins out of the cell cytoplasm. It is a molecular chaperone that binds to a subset of precursor proteins, maintaining them in a translocation-competent state. It also specifically binds to its receptor SecA. The protein is Protein-export protein SecB of Cereibacter sphaeroides (strain ATCC 17029 / ATH 2.4.9) (Rhodobacter sphaeroides).